The following is a 5488-amino-acid chain: Polyketide synthase PksN (5488 aa).

Residues 3–301 (RQLKSPLSEG…NMMAVRSKNI (299 aa)) form a condensation region. The WD 1 repeat unit spans residues 165–205 (QQPSTADYYDFVDWENRMLTGREGEEHLAYWKEQLSGSLPV). Positions 493-903 (TYKEVDEKST…EFPGILDQAV (411 aa)) are adenylation. The stretch at 965-1006 (RKELEKREIVFNRRKPNHLQLTEIEDQVLRIWEETLKVSGFG) is one WD 2 repeat. The Carrier 1 domain maps to 983-1058 (LQLTEIEDQV…AISEYILEMK (76 aa)). S1018 bears the O-(pantetheine 4'-phosphoryl)serine mark. The Ketosynthase family 3 (KS3) 1 domain maps to 1089 to 1515 (DDSVAIVGIS…GTNAHAIFEQ (427 aa)). Active-site for beta-ketoacyl synthase 1 activity residues include C1261, H1397, and H1437. Positions 1700 to 1826 (HPLVHHNTSV…GKAELIQLKR (127 aa)) are N-terminal hotdog fold 1. The PKS/mFAS DH 1 domain maps to 1700-1992 (HPLVHHNTSV…TRVMEADIQT (293 aa)). H1729 (proton acceptor; for dehydratase activity 1) is an active-site residue. A C-terminal hotdog fold 1 region spans residues 1840–1992 (DQSKMDAASF…TRVMEADIQT (153 aa)). D1900 serves as the catalytic Proton donor; for dehydratase activity 1. Residues 2165–2204 (KQAKGDGSKPWKDNGVYLISGGAGGLGHIFAKEIAEQTKN) form a WD 3 repeat. In terms of domain architecture, Carrier 2 spans 2448-2525 (SLLDKVKAML…AFGKHLSEEY (78 aa)). S2485 bears the O-(pantetheine 4'-phosphoryl)serine mark. In terms of domain architecture, Ketosynthase family 3 (KS3) 2 spans 2576-3012 (PEPIAIVGIS…GVNAHVIIEE (437 aa)). Active-site for beta-ketoacyl synthase 2 activity residues include C2747, H2882, and H2928. A coiled-coil region spans residues 3038-3109 (KNEARLKEHA…AAEKSGVEDV (72 aa)). Residues 3207-3332 (HPLMHQNTSN…GSAVLNPAEN (126 aa)) are N-terminal hotdog fold 2. The 286-residue stretch at 3207 to 3492 (HPLMHQNTSN…FRAAEGGSGS (286 aa)) folds into the PKS/mFAS DH 2 domain. The active-site Proton acceptor; for dehydratase activity 2 is the H3236. Positions 3346-3492 (QESHFSVNEV…FRAAEGGSGS (147 aa)) are C-terminal hotdog fold 2. Catalysis depends on D3408, which acts as the Proton donor; for dehydratase activity 2. The stretch at 3626–3655 (DSHENVESVIEKLKENKRHTEDQHIKYEKG) forms a coiled coil. A WD 4 repeat occupies 3666-3705 (QIDDREISMPWRDKGVYLITGGAGGLGFIFAKEIARQAEQ). The Carrier 3 domain occupies 3952–4026 (DHIQEVLKQT…AFAGYLSEEY (75 aa)). Residue S3986 is modified to O-(pantetheine 4'-phosphoryl)serine. One can recognise a Ketosynthase family 3 (KS3) 3 domain in the interval 4076–4511 (PEPIAIVGMS…GVNAHVVIEE (436 aa)). Residues C4245, H4380, and H4427 each act as for beta-ketoacyl synthase 3 activity in the active site. Residues 4706–4830 (HPLIHVNTSD…GSASIRGAGD (125 aa)) form an N-terminal hotdog fold 3 region. The PKS/mFAS DH 3 domain occupies 4706–4988 (HPLIHVNTSD…SRLLEEGIQP (283 aa)). The Proton acceptor; for dehydratase activity 3 role is filled by H4735. Residues 4844-4988 (SLSTLSHDQC…SRLLEEGIQP (145 aa)) form a C-terminal hotdog fold 3 region. The active-site Proton donor; for dehydratase activity 3 is the D4906. The WD 5 repeat unit spans residues 5206 to 5244 (HNNQPVHTKYKHGGVYVVIGGAGGIGEAWSEYMIRTYQA). A coiled-coil region spans residues 5275–5303 (IQADAANREELERAYETMKQTHREINGII).

It belongs to the ATP-dependent AMP-binding enzyme family. It depends on pantetheine 4'-phosphate as a cofactor.

Its subcellular location is the cytoplasm. It functions in the pathway antibiotic biosynthesis; bacillaene biosynthesis. In terms of biological role, involved in some intermediate steps for the synthesis of the antibiotic polyketide bacillaene which is involved in secondary metabolism. This is Polyketide synthase PksN (pksN) from Bacillus subtilis (strain 168).